The primary structure comprises 413 residues: O-methyltransferase kntB (413 aa).

S-adenosyl-L-methionine contacts are provided by residues 255 to 256, Asp-280, 302 to 303, and Arg-319; these read GG and NF. The Proton acceptor role is filled by His-322.

It belongs to the class I-like SAM-binding methyltransferase superfamily. Cation-independent O-methyltransferase family. S-adenosyl-L-methionine serves as cofactor.

Its pathway is secondary metabolite biosynthesis. In terms of biological role, non-reducing polyketide synthase; part of the gene cluster that mediates the biosynthesis of the bicoumarin kotanin. The non-reducing polyketide synthase ktnS first catalyzes the formation of the pentaketidic 4,7-dihydroxy-5-methylcoumarin from acetyl coenzyme A and 4 malonyl coenzyme A molecules. Further O-methylation by ktnB leads to the formation of 7-demethylsiderin. Then, an oxidative phenol coupling catalyzed by the cytochrome P450 monooxygenase ktnC forms the 8,8'-dimer P-orlandin via dimerization the monomeric precursor, 7-demethylsiderin. P-orlandin is subsequently O-methylated in a stepwise fashion to demethylkotanin and kotanin. In Aspergillus niger (strain ATCC MYA-4892 / CBS 513.88 / FGSC A1513), this protein is O-methyltransferase kntB.